The following is a 59-amino-acid chain: Cuticle protein 7 isoform b (59 aa).

The residue at position 1 (Gln1) is a Pyrrolidone carboxylic acid.

This is Cuticle protein 7 isoform b from Limulus polyphemus (Atlantic horseshoe crab).